The following is a 249-amino-acid chain: 2,3-bisphosphoglycerate-dependent phosphoglycerate mutase (249 aa).

Residues 9 to 16, 22 to 23, arginine 61, 88 to 91, lysine 99, 115 to 116, and 184 to 185 contribute to the substrate site; these read RHGQSQWN, TG, ERHY, RR, and GN. The Tele-phosphohistidine intermediate role is filled by histidine 10. The active-site Proton donor/acceptor is the glutamate 88.

This sequence belongs to the phosphoglycerate mutase family. BPG-dependent PGAM subfamily. Homodimer.

It carries out the reaction (2R)-2-phosphoglycerate = (2R)-3-phosphoglycerate. It functions in the pathway carbohydrate degradation; glycolysis; pyruvate from D-glyceraldehyde 3-phosphate: step 3/5. In terms of biological role, catalyzes the interconversion of 2-phosphoglycerate and 3-phosphoglycerate. The protein is 2,3-bisphosphoglycerate-dependent phosphoglycerate mutase of Xanthomonas oryzae pv. oryzae (strain PXO99A).